Consider the following 416-residue polypeptide: Serine hydroxymethyltransferase (416 aa).

(6S)-5,6,7,8-tetrahydrofolate contacts are provided by residues L118 and 122-124 (GHL). K227 bears the N6-(pyridoxal phosphate)lysine mark. Residues E242 and 350 to 352 (SPF) each bind (6S)-5,6,7,8-tetrahydrofolate.

Belongs to the SHMT family. Homodimer. Pyridoxal 5'-phosphate serves as cofactor.

It localises to the cytoplasm. It carries out the reaction (6R)-5,10-methylene-5,6,7,8-tetrahydrofolate + glycine + H2O = (6S)-5,6,7,8-tetrahydrofolate + L-serine. It functions in the pathway one-carbon metabolism; tetrahydrofolate interconversion. Its pathway is amino-acid biosynthesis; glycine biosynthesis; glycine from L-serine: step 1/1. Catalyzes the reversible interconversion of serine and glycine with tetrahydrofolate (THF) serving as the one-carbon carrier. This reaction serves as the major source of one-carbon groups required for the biosynthesis of purines, thymidylate, methionine, and other important biomolecules. Also exhibits THF-independent aldolase activity toward beta-hydroxyamino acids, producing glycine and aldehydes, via a retro-aldol mechanism. The protein is Serine hydroxymethyltransferase of Syntrophotalea carbinolica (strain DSM 2380 / NBRC 103641 / GraBd1) (Pelobacter carbinolicus).